Reading from the N-terminus, the 799-residue chain is 1,4-alpha-glucan-branching enzyme 2, chloroplastic/amyloplastic (799 aa).

Residues 1–57 (MAFRVSGAVLGGAVRAPRLTGGGEGSLVFRHTGLFLTRGARVGCSGTHGAMRAAAAA) constitute a chloroplast transit peptide. (1,4-alpha-D-glucosyl)n-binding residues include W196 and K232. Catalysis depends on D447, which acts as the Nucleophile. The active-site Proton donor is the E502.

It belongs to the glycosyl hydrolase 13 family. GlgB subfamily. In terms of assembly, monomer.

The protein resides in the plastid. It is found in the chloroplast. It localises to the amyloplast. The catalysed reaction is Transfers a segment of a (1-&gt;4)-alpha-D-glucan chain to a primary hydroxy group in a similar glucan chain.. It functions in the pathway glycan biosynthesis; starch biosynthesis. In terms of biological role, catalyzes the formation of the alpha-1,6-glucosidic linkages in starch by scission of a 1,4-alpha-linked oligosaccharide from growing alpha-1,4-glucan chains and the subsequent attachment of the oligosaccharide to the alpha-1,6 position. This is 1,4-alpha-glucan-branching enzyme 2, chloroplastic/amyloplastic (SBE1) from Zea mays (Maize).